The sequence spans 111 residues: uncharacterized protein (111 aa).

Residue Gly2 is the site of N-myristoyl glycine; by host attachment.

This is an uncharacterized protein from Acanthamoeba polyphaga mimivirus (APMV).